The following is a 306-amino-acid chain: Putative F-box protein At1g47300 (306 aa).

One can recognise an F-box domain in the interval 1–45 (MISDSIPKELILEIMLRLPAKSIARFHCVSKQWASMLSRPYFTEL). Residues 235-278 (DPKLLESKEEEEEEEEEEEEEEEEEEEEEEEEEEEESKEREKEK) are disordered. A compositionally biased stretch (acidic residues) spans 242 to 270 (KEEEEEEEEEEEEEEEEEEEEEEEEEEEE).

This chain is Putative F-box protein At1g47300, found in Arabidopsis thaliana (Mouse-ear cress).